Reading from the N-terminus, the 140-residue chain is ATP synthase epsilon chain (140 aa).

Belongs to the ATPase epsilon chain family. In terms of assembly, F-type ATPases have 2 components, CF(1) - the catalytic core - and CF(0) - the membrane proton channel. CF(1) has five subunits: alpha(3), beta(3), gamma(1), delta(1), epsilon(1). CF(0) has three main subunits: a, b and c.

The protein resides in the cell inner membrane. Produces ATP from ADP in the presence of a proton gradient across the membrane. The protein is ATP synthase epsilon chain of Colwellia maris.